Consider the following 140-residue polypeptide: Ribosome maturation factor RimP (140 aa).

The protein belongs to the RimP family.

Its subcellular location is the cytoplasm. Its function is as follows. Required for maturation of 30S ribosomal subunits. In Campylobacter jejuni subsp. jejuni serotype O:23/36 (strain 81-176), this protein is Ribosome maturation factor RimP.